Consider the following 158-residue polypeptide: Small ribosomal subunit protein uS9 (158 aa).

The protein belongs to the universal ribosomal protein uS9 family.

In Brucella melitensis biotype 1 (strain ATCC 23456 / CCUG 17765 / NCTC 10094 / 16M), this protein is Small ribosomal subunit protein uS9.